A 151-amino-acid chain; its full sequence is Glycosylation-dependent cell adhesion molecule 1 (151 aa).

Residues 1–19 (MKFFTVLLFVSLAATSLAL) form the signal peptide. Residues 29–123 (MKTQPTDAIP…ENLTKSSQTV (95 aa)) are disordered. Positions 42–52 (STPTSYTSEES) are enriched in low complexity. The segment covering 53–71 (TSSKDLSKEPSIFREELIS) has biased composition (basic and acidic residues). 4 positions are modified to phosphoserine: Ser54, Ser59, Ser63, and Ser71. The span at 103 to 114 (RPTTSAATTSEE) shows a compositional bias: low complexity. Asn115 carries N-linked (GlcNAc...) asparagine glycosylation.

Belongs to the PP3/GlyCAM-1 family. Extensively O-glycosylated. In terms of tissue distribution, lymph nodes. Associated with the lumenal surface of the high endothelial venules of peripheral lymph nodes.

Its subcellular location is the cell membrane. In terms of biological role, adhesion molecule that accomplishes cell binding by presenting carbohydrate(s) to the lectin domain of L-selectin. The sequence is that of Glycosylation-dependent cell adhesion molecule 1 (Glycam1) from Mus musculus (Mouse).